The following is a 401-amino-acid chain: uncharacterized protein (401 aa).

[4Fe-4S] cluster-binding residues include cysteine 7, cysteine 13, cysteine 16, and cysteine 94. S-adenosyl-L-methionine-binding residues include glutamine 230, tyrosine 259, glutamate 280, and aspartate 328. Residue cysteine 355 is the Nucleophile of the active site.

The protein belongs to the class I-like SAM-binding methyltransferase superfamily. RNA M5U methyltransferase family.

This is an uncharacterized protein from Chlamydia caviae (strain ATCC VR-813 / DSM 19441 / 03DC25 / GPIC) (Chlamydophila caviae).